The following is a 220-amino-acid chain: Peptide methionine sulfoxide reductase MsrA (220 aa).

Residue C54 is part of the active site.

The protein belongs to the MsrA Met sulfoxide reductase family.

The catalysed reaction is L-methionyl-[protein] + [thioredoxin]-disulfide + H2O = L-methionyl-(S)-S-oxide-[protein] + [thioredoxin]-dithiol. It catalyses the reaction [thioredoxin]-disulfide + L-methionine + H2O = L-methionine (S)-S-oxide + [thioredoxin]-dithiol. Functionally, has an important function as a repair enzyme for proteins that have been inactivated by oxidation. Catalyzes the reversible oxidation-reduction of methionine sulfoxide in proteins to methionine. The protein is Peptide methionine sulfoxide reductase MsrA of Salinispora arenicola (strain CNS-205).